The chain runs to 853 residues: MKNKKYLQFGGIAAVILIVLFLVSLFSSDTRNFQEVDTSVAMAQLDAGNVAEAQIDDREQRVRLTLREPITVDEREGVEEILAQYPARTAPAIFEKVEASNTDSYTTNVTQESFLMSMLSFILPMVIIFGLLMFFLTRMQGGGMFGIGGSKAKQLTKDMPTNTFADVAGAEEAVDELHEIKDFLEDPTRYEALGAKIPRGVLLYGPPGTGKTLLARAVAGEAGVPFYSISGSDFVEMFVGVGASRVRDLFKQAKENSPCIIFVDEIDAVGRARGSGMGGGHDEREQTLNQLLVEMDGFGDRQGVILMAATNRPDVLDPALLRPGRFDRQIPVTNPDLRGREQILEVHAKGKPFAPDADIKALAKRTAGMSGADLANVLNEAALLTARVGGNVITADALEEATDRVVGGPRRSGKVISEKEKKVTAYHEGGHTLSAWALEDIERVYKVTILARGRTGGHAMTAQEDDKGMYNRNELFARLVFAMGGRSAEELVFGEPTTGASADIEMATKIARSMVTEYGMSPAVGMVKYGQEQGDPFSGRGGGGNLDHSQEVAATIDTEVQFLLDKAHEVSYSILAEYRDHLDRLAEKLLEKETLRRPDLEALFDDIVPRKVAEVFPDESTRFPRQENREPVKTPVELALERGEEPPKKFSILEASRATRERRRKELEAQGKLPVQPASSAGVAPAAGAAAGSYGTPPPADWSVPGSAGKHRSRAEEQPAEQGFPAQTPAQAPEQSPDSSGGRPNPYATPTASGEHPGMKAYGFGDSELMDQSTGAEHTPGNVSQESPTEMIGFRLPDHERSDYPEKAQKESVLDASETTEMPVVPDQPIDGDSGKSAEGTQENPENEGDNRG.

The Cytoplasmic segment spans residues 1-5; that stretch reads MKNKK. A helical membrane pass occupies residues 6–26; that stretch reads YLQFGGIAAVILIVLFLVSLF. At 27–113 the chain is on the extracellular side; sequence SSDTRNFQEV…SYTTNVTQES (87 aa). The chain crosses the membrane as a helical span at residues 114 to 134; that stretch reads FLMSMLSFILPMVIIFGLLMF. At 135-853 the chain is on the cytoplasmic side; the sequence is FLTRMQGGGM…NPENEGDNRG (719 aa). 205–212 contributes to the ATP binding site; it reads GPPGTGKT. Residue histidine 427 participates in Zn(2+) binding. Residue glutamate 428 is part of the active site. Positions 431 and 503 each coordinate Zn(2+). Basic and acidic residues-rich tracts occupy residues 619–632 and 639–648; these read ESTR…REPV and ALERGEEPPK. Residues 619-853 form a disordered region; the sequence is ESTRFPRQEN…NPENEGDNRG (235 aa). Over residues 677-695 the composition is skewed to low complexity; sequence PASSAGVAPAAGAAAGSYG. 2 stretches are compositionally biased toward polar residues: residues 728 to 739 and 770 to 788; these read TPAQAPEQSPDS and MDQS…QESP. The span at 796–813 shows a compositional bias: basic and acidic residues; that stretch reads LPDHERSDYPEKAQKESV.

The protein in the central section; belongs to the AAA ATPase family. It in the C-terminal section; belongs to the peptidase M41 family. As to quaternary structure, homohexamer. The cofactor is Zn(2+).

It localises to the cell membrane. In terms of biological role, acts as a processive, ATP-dependent zinc metallopeptidase for both cytoplasmic and membrane proteins. Plays a role in the quality control of integral membrane proteins. The protein is ATP-dependent zinc metalloprotease FtsH of Corynebacterium glutamicum (strain ATCC 13032 / DSM 20300 / JCM 1318 / BCRC 11384 / CCUG 27702 / LMG 3730 / NBRC 12168 / NCIMB 10025 / NRRL B-2784 / 534).